We begin with the raw amino-acid sequence, 537 residues long: Cytochrome P450 CYP12A2 (537 aa).

Heme is bound at residue cysteine 483.

This sequence belongs to the cytochrome P450 family. Heme serves as cofactor.

In Musca domestica (House fly), this protein is Cytochrome P450 CYP12A2 (CYP12A2).